A 545-amino-acid chain; its full sequence is Delta 8-(E)-sphingolipid desaturase (545 aa).

A Cytochrome b5 heme-binding domain is found at 1–82; that stretch reads MASHTKDALL…MLAFQIGRIQ (82 aa). Heme contacts are provided by His-42 and His-65. Residues 97 to 124 form a disordered region; that stretch reads FRHYDENADSEEDDTSGQSQPPSPIFDA. A helical transmembrane segment spans residues 227-247; the sequence is LGWYSVSAVFLGCFWHQLVFS. Positions 249-253 match the Histidine box-1 motif; the sequence is HDAGH. Residues 262 to 282 traverse the membrane as a helical segment; that stretch reads VDSIIGILIADFLGGLSLGWW. Residues 286–290 carry the Histidine box-2 motif; the sequence is HNVHH. The next 2 membrane-spanning stretches (helical) occupy residues 382-402 and 408-428; these read IAGQIFFWIWFGYGVLYCSIP and LSFLFISHMVTAPVHVQITLS. The Histidine box-3 signature appears at 470 to 474; sequence QAIHH.

It belongs to the fatty acid desaturase type 1 family.

Its subcellular location is the membrane. It carries out the reaction an N-acylsphing-4-enine + 2 Fe(II)-[cytochrome b5] + O2 + 2 H(+) = a (4E,8E)-4-sphinga-4,8-dienine ceramide + 2 Fe(III)-[cytochrome b5] + 2 H2O. Its pathway is lipid metabolism; sphingolipid metabolism. Delta(8)-fatty-acid desaturase which introduces a double bond at the 8-position in the long-chain base (LCB) of ceramides. Required for the formation of the di-unsaturated sphingoid base (E,E)-sphinga-4,8-dienine during glucosylceramide (GluCer) biosynthesis. Plays an important role in conidiation. This Emericella nidulans (strain FGSC A4 / ATCC 38163 / CBS 112.46 / NRRL 194 / M139) (Aspergillus nidulans) protein is Delta 8-(E)-sphingolipid desaturase.